We begin with the raw amino-acid sequence, 441 residues long: Xaa-Pro dipeptidase (441 aa).

Residues Asp-244, Asp-255, His-336, Glu-381, and Glu-420 each coordinate Mn(2+).

Belongs to the peptidase M24B family. Bacterial-type prolidase subfamily. It depends on Mn(2+) as a cofactor.

It carries out the reaction Xaa-L-Pro dipeptide + H2O = an L-alpha-amino acid + L-proline. Functionally, splits dipeptides with a prolyl residue in the C-terminal position. The chain is Xaa-Pro dipeptidase from Xanthomonas axonopodis pv. citri (strain 306).